Consider the following 387-residue polypeptide: 3-ketoacyl-CoA thiolase (387 aa).

Cysteine 91 acts as the Acyl-thioester intermediate in catalysis. Residues histidine 343 and cysteine 373 each act as proton acceptor in the active site.

Belongs to the thiolase-like superfamily. Thiolase family. Heterotetramer of two alpha chains (FadB) and two beta chains (FadA).

The protein localises to the cytoplasm. The enzyme catalyses an acyl-CoA + acetyl-CoA = a 3-oxoacyl-CoA + CoA. Its pathway is lipid metabolism; fatty acid beta-oxidation. Its function is as follows. Catalyzes the final step of fatty acid oxidation in which acetyl-CoA is released and the CoA ester of a fatty acid two carbons shorter is formed. The polypeptide is 3-ketoacyl-CoA thiolase (Shewanella baltica (strain OS155 / ATCC BAA-1091)).